A 292-amino-acid chain; its full sequence is 4-hydroxy-tetrahydrodipicolinate synthase (292 aa).

Threonine 45 lines the pyruvate pocket. Tyrosine 133 (proton donor/acceptor) is an active-site residue. The active-site Schiff-base intermediate with substrate is lysine 161. Isoleucine 203 serves as a coordination point for pyruvate.

The protein belongs to the DapA family. In terms of assembly, homotetramer; dimer of dimers.

Its subcellular location is the cytoplasm. It carries out the reaction L-aspartate 4-semialdehyde + pyruvate = (2S,4S)-4-hydroxy-2,3,4,5-tetrahydrodipicolinate + H2O + H(+). It functions in the pathway amino-acid biosynthesis; L-lysine biosynthesis via DAP pathway; (S)-tetrahydrodipicolinate from L-aspartate: step 3/4. In terms of biological role, catalyzes the condensation of (S)-aspartate-beta-semialdehyde [(S)-ASA] and pyruvate to 4-hydroxy-tetrahydrodipicolinate (HTPA). This is 4-hydroxy-tetrahydrodipicolinate synthase from Herminiimonas arsenicoxydans.